The chain runs to 232 residues: Ribosomal RNA small subunit methyltransferase G (232 aa).

S-adenosyl-L-methionine is bound by residues Gly93, Leu98, 144-145 (VE), and Arg163.

Belongs to the methyltransferase superfamily. RNA methyltransferase RsmG family.

Its subcellular location is the cytoplasm. The enzyme catalyses guanosine(527) in 16S rRNA + S-adenosyl-L-methionine = N(7)-methylguanosine(527) in 16S rRNA + S-adenosyl-L-homocysteine. In terms of biological role, specifically methylates the N7 position of guanine in position 527 of 16S rRNA. This chain is Ribosomal RNA small subunit methyltransferase G, found in Burkholderia pseudomallei (strain 1710b).